Here is a 430-residue protein sequence, read N- to C-terminus: Formate-dependent phosphoribosylglycinamide formyltransferase (430 aa).

N(1)-(5-phospho-beta-D-ribosyl)glycinamide-binding positions include 26 to 27 (EL) and Glu86. Residues Arg118, Lys159, 199–202 (EEHI), and Glu207 contribute to the ATP site. Residues 123 to 319 (ETLVKEAKVP…EFALHLRAVL (197 aa)) form the ATP-grasp domain. Glu276 and Glu288 together coordinate Mg(2+). Residues Asp295, Lys375, and 382–383 (RR) contribute to the N(1)-(5-phospho-beta-D-ribosyl)glycinamide site.

It belongs to the PurK/PurT family. As to quaternary structure, homodimer.

It catalyses the reaction N(1)-(5-phospho-beta-D-ribosyl)glycinamide + formate + ATP = N(2)-formyl-N(1)-(5-phospho-beta-D-ribosyl)glycinamide + ADP + phosphate + H(+). Its pathway is purine metabolism; IMP biosynthesis via de novo pathway; N(2)-formyl-N(1)-(5-phospho-D-ribosyl)glycinamide from N(1)-(5-phospho-D-ribosyl)glycinamide (formate route): step 1/1. Functionally, involved in the de novo purine biosynthesis. Catalyzes the transfer of formate to 5-phospho-ribosyl-glycinamide (GAR), producing 5-phospho-ribosyl-N-formylglycinamide (FGAR). Formate is provided by PurU via hydrolysis of 10-formyl-tetrahydrofolate. This is Formate-dependent phosphoribosylglycinamide formyltransferase from Pyrococcus horikoshii (strain ATCC 700860 / DSM 12428 / JCM 9974 / NBRC 100139 / OT-3).